A 37-amino-acid polypeptide reads, in one-letter code: Large ribosomal subunit protein bL36 (37 aa).

The protein belongs to the bacterial ribosomal protein bL36 family.

This is Large ribosomal subunit protein bL36 from Caldicellulosiruptor saccharolyticus (strain ATCC 43494 / DSM 8903 / Tp8T 6331).